The chain runs to 859 residues: Leucine--tRNA ligase (859 aa).

Positions 42 to 52 (PYPSGRLHMGH) match the 'HIGH' region motif. Positions 618 to 622 (KMSKS) match the 'KMSKS' region motif. K621 serves as a coordination point for ATP.

It belongs to the class-I aminoacyl-tRNA synthetase family.

It is found in the cytoplasm. The enzyme catalyses tRNA(Leu) + L-leucine + ATP = L-leucyl-tRNA(Leu) + AMP + diphosphate. This Shewanella baltica (strain OS223) protein is Leucine--tRNA ligase.